Reading from the N-terminus, the 343-residue chain is Anthranilate phosphoribosyltransferase (343 aa).

5-phospho-alpha-D-ribose 1-diphosphate contacts are provided by residues G83, 86-87, T91, 93-96, 111-119, and S123; these read GD, NIST, and KHGGRSVSS. Residue G83 participates in anthranilate binding. S95 contacts Mg(2+). R169 provides a ligand contact to anthranilate. Positions 228 and 229 each coordinate Mg(2+).

This sequence belongs to the anthranilate phosphoribosyltransferase family. In terms of assembly, homodimer. The cofactor is Mg(2+).

It carries out the reaction N-(5-phospho-beta-D-ribosyl)anthranilate + diphosphate = 5-phospho-alpha-D-ribose 1-diphosphate + anthranilate. Its pathway is amino-acid biosynthesis; L-tryptophan biosynthesis; L-tryptophan from chorismate: step 2/5. Its function is as follows. Catalyzes the transfer of the phosphoribosyl group of 5-phosphorylribose-1-pyrophosphate (PRPP) to anthranilate to yield N-(5'-phosphoribosyl)-anthranilate (PRA). The polypeptide is Anthranilate phosphoribosyltransferase (Thiobacillus denitrificans (strain ATCC 25259 / T1)).